A 197-amino-acid polypeptide reads, in one-letter code: uncharacterized protein (197 aa).

Residues 11 to 31 traverse the membrane as a helical segment; that stretch reads ICGFSLVALTIAGIVGGVYLV.

It is found in the membrane. This is an uncharacterized protein from Mycoplasma pneumoniae (strain ATCC 29342 / M129 / Subtype 1) (Mycoplasmoides pneumoniae).